The following is a 798-amino-acid chain: Integrin beta-1 (798 aa).

The N-terminal stretch at 1–20 (MNLQLIFWIGLISSICCVFG) is a signal peptide. Over 21–728 (QADENRCLKA…ETPECPTGPD (708 aa)) the chain is Extracellular. A PSI domain is found at 26–76 (RCLKANAKSCGECIQAGPNCGWCVNSTFLQEGMPTSARCDDLEALKKKGCH). 28 disulfide bridges follow: C27/C45, C35/C464, C38/C64, C48/C75, C207/C213, C261/C301, C401/C415, C435/C462, C466/C486, C477/C489, C491/C500, C502/C533, C516/C531, C525/C536, C538/C553, C555/C576, C560/C574, C568/C579, C581/C590, C592/C615, C599/C613, C607/C618, C620/C630, C633/C636, C640/C691, C646/C665, C649/C661, and C699/C723. N50 carries N-linked (GlcNAc...) asparagine glycosylation. Over residues 75-91 (CHPDDIENPRGSKDVKK) the composition is skewed to basic and acidic residues. A disordered region spans residues 75-107 (CHPDDIENPRGSKDVKKNKNVTNRSKGTAEKLQ). N94 and N97 each carry an N-linked (GlcNAc...) asparagine glycan. A VWFA domain is found at 140-378 (DYPIDLYYLM…QLIIDAYNSL (239 aa)). Residues S152 and S154 each coordinate Mg(2+). Ca(2+) contacts are provided by S154, D157, D158, and E189. The segment at 207-213 (CTSEQNC) is CX3CL1-binding. N212 is a glycosylation site (N-linked (GlcNAc...) asparagine). Ca(2+) contacts are provided by N244, D246, P248, and E249. A Mg(2+)-binding site is contributed by E249. N-linked (GlcNAc...) asparagine glycosylation occurs at N269. Residues 295-314 (LPNDGQCHLENDVYTMSHYY) form a CX3CL1-binding region. A362 serves as a coordination point for Ca(2+). 3 N-linked (GlcNAc...) asparagine glycosylation sites follow: N363, N406, and N417. The interaction with TMEM182 stretch occupies residues 383–465 (ILENSKLPEG…IILQFICECE (83 aa)). I-EGF domains lie at 466 to 501 (CQNEGIPSSPKCHEGNGSFECGACRCNEGRVGRHCE), 502 to 554 (CSTD…KFCE), 555 to 591 (CDNFNCDRSNGLICGGNGVCKCRVCECNPNYTGSACD), and 592 to 631 (CSLDTTSCMATNGQICNGRGICECGACKCTDPKFQGPTCE). A glycan (N-linked (GlcNAc...) asparagine) is linked at N481. A glycan (N-linked (GlcNAc...) asparagine) is linked at N520. N-linked (GlcNAc...) asparagine glycosylation occurs at N584. Residue N669 is glycosylated (N-linked (GlcNAc...) asparagine). The chain crosses the membrane as a helical span at residues 729–751 (IIPIVAGVVAGIVLIGLALLLIW). Over 752 to 798 (KLLMIIHDTREFAKFEKEKMNAKWDTGENPIYKSAVTTVVNPKYEGK) the chain is Cytoplasmic. Positions 762–767 (EFAKFE) are signal for sorting from recycling endosomes; interaction with ACAP1. T777 is subject to Phosphothreonine. Residue Y783 is modified to Phosphotyrosine. Residue S785 is modified to Phosphoserine. Positions 785–792 (SAVTTVVN) are interaction with ITGB1BP1. At T789 the chain carries Phosphothreonine. K794 carries the post-translational modification N6-acetyllysine; alternate. K794 participates in a covalent cross-link: Glycyl lysine isopeptide (Lys-Gly) (interchain with G-Cter in SUMO1); alternate.

The protein belongs to the integrin beta chain family. As to quaternary structure, interacts with seprase FAP (seprase); the interaction occurs at the cell surface of invadopodia membrane in a collagen-dependent manner. Heterodimer of an alpha and a beta subunit. Beta-1 associates with either alpha-1, alpha-2, alpha-3, alpha-4, alpha-5, alpha-6, alpha-7, alpha-8, alpha-9, alpha-10, alpha-11 or alpha-V. ITGA6:ITGB1 is found in a complex with CD9; interaction takes place in oocytes and is involved in sperm-egg fusion. Binds LGALS3BP and NMRK2, when associated with alpha-7, but not with alpha-5. Interacts with FLNA, FLNB, FLNC and RANBP9. Interacts with KRT1 in the presence of RACK1 and SRC. Interacts with JAML; integrin alpha-4/beta-1 may regulate leukocyte to endothelial cells adhesion by controlling JAML homodimerization. Interacts with RAB21. Interacts (via the cytoplasmic region) with RAB25 (via the hypervariable C-terminal region). Interacts with MYO10. Interacts with ITGB1BP1 (via C-terminal region); the interaction is a prerequisite for focal adhesion disassembly. Interacts with TLN1; the interaction is prevented by competitive binding of ITGB1BP1. Interacts with ACAP1; required for ITGB1 recycling. Interacts with ASAP3. Interacts with FERMT2; the interaction is inhibited in presence of ITGB1BP1. Interacts with DAB2. Interacts with FGR and HCK. Interacts with alpha-7A and alpha-7B in adult skeletal muscle. Interacts with alpha-7B in cardiomyocytes of adult heart. Interacts with EMP2; the interaction may be direct or indirect and ITGB1 has a heterodimer form. ITGA5:ITGB1 interacts with CCN3. ITGA4:ITGB1 is found in a ternary complex with CX3CR1 and CX3CL1. ITGA5:ITGB1 interacts with FBN1. ITGA5:ITGB1 acts as a receptor for fibronectin FN1 and mediates R-G-D-dependent cell adhesion to FN1. ITGA5:ITGB1 interacts with IL1B. Interacts with MDK. ITGA4:ITGB1 interacts with MDK; this interaction mediates MDK-induced osteoblast cells migration through PXN phosphorylation. ITGA6:ITGB1 interacts with MDK; this interaction mediates MDK-induced neurite-outgrowth. ITGA5:ITGB1 interacts with ACE2. Interacts with TMEM182 and LAMB1. Interacts with tensin TNS3; TNS3 also interacts with PEAK1, thus acting as an adapter molecule to bridge the association of PEAK1 with ITGB1. Interacts with tensin TNS4; the interaction displaces tensin TNS3 from the ITGB1 cytoplasmic tail and promotes ITGB1 stability. Integrin ITGA9:ITGB1 interacts with SPP1/OPN (via N-terminus). Integrin ITGA9:ITGB1 interacts with TNC/TNFN3 (via the 3rd Fibronectin type-III domain). Integrins ITGA4:ITGB1 and ITGA9:ITGB1 interact with SVEP1 (via Sushi domain 21); thereby inhibit Ca(2+) intracellular signaling and as a result repress vasocontraction. ITGA4:ITGB1 and ITGA5:ITGB1 interacts with SELP. Interacts with CD248. ITGA5:ITGB1 interacts with IGFBP1. ITGA4:ITGB1 interacts with BCAM. Interacts with ADGRG6.

The protein localises to the cell membrane. The protein resides in the cell projection. It is found in the invadopodium membrane. It localises to the ruffle membrane. Its subcellular location is the recycling endosome. The protein localises to the melanosome. The protein resides in the lamellipodium. It is found in the ruffle. It localises to the cell junction. Its subcellular location is the focal adhesion. Its function is as follows. Integrins alpha-1/beta-1, alpha-2/beta-1, alpha-10/beta-1 and alpha-11/beta-1 are receptors for collagen. Integrins alpha-1/beta-1 and alpha-2/beta-2 recognize the proline-hydroxylated sequence G-F-P-G-E-R in collagen. Integrins alpha-2/beta-1, alpha-3/beta-1, alpha-4/beta-1, alpha-5/beta-1, alpha-8/beta-1, alpha-10/beta-1, alpha-11/beta-1 and alpha-V/beta-1 are receptors for fibronectin. Alpha-4/beta-1 recognizes one or more domains within the alternatively spliced CS-1 and CS-5 regions of fibronectin. Integrin alpha-5/beta-1 is a receptor for fibrinogen. Integrin alpha-1/beta-1, alpha-2/beta-1, alpha-6/beta-1 and alpha-7/beta-1 are receptors for lamimin. Integrin alpha-6/beta-1 (ITGA6:ITGB1) is present in oocytes and is involved in sperm-egg fusion. Integrin alpha-4/beta-1 is a receptor for VCAM1 and recognizes the sequence Q-I-D-S in VCAM1. Integrin alpha-9/beta-1 is a receptor for VCAM1, cytotactin and osteopontin. It recognizes the sequence A-E-I-D-G-I-E-L in cytotactin. Integrin alpha-3/beta-1 is a receptor for epiligrin, thrombospondin and CSPG4. Integrin alpha-3/beta-1 provides a docking site for FAP (seprase) at invadopodia plasma membranes in a collagen-dependent manner and hence may participate in the adhesion, formation of invadopodia and matrix degradation processes, promoting cell invasion. Alpha-3/beta-1 may mediate with LGALS3 the stimulation by CSPG4 of endothelial cells migration. Integrin alpha-V/beta-1 is a receptor for vitronectin. Beta-1 integrins recognize the sequence R-G-D in a wide array of ligands. When associated with alpha-7/beta-1 integrin, regulates cell adhesion and laminin matrix deposition. Involved in promoting endothelial cell motility and angiogenesis. Involved in osteoblast compaction through the fibronectin fibrillogenesis cell-mediated matrix assembly process and the formation of mineralized bone nodules. May be involved in up-regulation of the activity of kinases such as PKC via binding to KRT1. Together with KRT1 and RACK1, serves as a platform for SRC activation or inactivation. Plays a mechanistic adhesive role during telophase, required for the successful completion of cytokinesis. ITGA4:ITGB1 binds to fractalkine (CX3CL1) and may act as its coreceptor in CX3CR1-dependent fractalkine signaling. ITGA4:ITGB1 and ITGA5:ITGB1 bind to PLA2G2A via a site (site 2) which is distinct from the classical ligand-binding site (site 1) and this induces integrin conformational changes and enhanced ligand binding to site 1. ITGA5:ITGB1 acts as a receptor for fibrillin-1 (FBN1) and mediates R-G-D-dependent cell adhesion to FBN1. ITGA5:ITGB1 is a receptor for IL1B and binding is essential for IL1B signaling. ITGA5:ITGB3 is a receptor for soluble CD40LG and is required for CD40/CD40LG signaling. Plays an important role in myoblast differentiation and fusion during skeletal myogenesis. ITGA9:ITGB1 may play a crucial role in SVEP1/polydom-mediated myoblast cell adhesion. Integrins ITGA9:ITGB1 and ITGA4:ITGB1 repress PRKCA-mediated L-type voltage-gated channel Ca(2+) influx and ROCK-mediated calcium sensitivity in vascular smooth muscle cells via their interaction with SVEP1, thereby inhibit vasocontraction. This chain is Integrin beta-1 (ITGB1), found in Felis catus (Cat).